The sequence spans 206 residues: dITP/XTP pyrophosphatase (206 aa).

7-12 (SRNPKK) lines the substrate pocket. Aspartate 72 functions as the Proton acceptor in the catalytic mechanism. Aspartate 72 is a binding site for Mg(2+). Residues serine 73, 155 to 158 (FGYD), lysine 178, and 183 to 184 (HR) each bind substrate.

The protein belongs to the HAM1 NTPase family. As to quaternary structure, homodimer. The cofactor is Mg(2+).

The catalysed reaction is XTP + H2O = XMP + diphosphate + H(+). The enzyme catalyses dITP + H2O = dIMP + diphosphate + H(+). It catalyses the reaction ITP + H2O = IMP + diphosphate + H(+). Pyrophosphatase that catalyzes the hydrolysis of nucleoside triphosphates to their monophosphate derivatives, with a high preference for the non-canonical purine nucleotides XTP (xanthosine triphosphate), dITP (deoxyinosine triphosphate) and ITP. Seems to function as a house-cleaning enzyme that removes non-canonical purine nucleotides from the nucleotide pool, thus preventing their incorporation into DNA/RNA and avoiding chromosomal lesions. In Mycobacteroides abscessus (strain ATCC 19977 / DSM 44196 / CCUG 20993 / CIP 104536 / JCM 13569 / NCTC 13031 / TMC 1543 / L948) (Mycobacterium abscessus), this protein is dITP/XTP pyrophosphatase.